A 1638-amino-acid chain; its full sequence is Non-structural polyprotein 1AB (1638 aa).

Positions 130-222 (LVHQVMEKTR…KEKENALVSV (93 aa)) form a coiled coil. Transmembrane regions (helical) follow at residues 220–240 (VSVG…FGLI), 379–398 (VMSY…VLAG), 407–427 (APFI…CVAV), 437–457 (FILF…LLWL), 479–499 (ALVY…GVTL), and 507–527 (ILMF…CTTI). Active-site charge relay system; for serine protease activity residues include H600, D632, and S697. The stretch at 758–788 (KVSHAAILKELEELREEVQFLKKKCVTYDDY) forms a coiled coil. Y834 bears the O-(5'-phospho-RNA)-tyrosine mark. One can recognise a RdRp catalytic domain in the interval 1381–1515 (RYFVEMDWTR…SIRKGFVEYE (135 aa)).

It belongs to the astroviridae polyprotein 1AB family. As to quaternary structure, monomer. Post-translationally, cleaved by the viral and host proteases. The protease is probably autocatalytically cleaved.

It is found in the host membrane. It catalyses the reaction RNA(n) + a ribonucleoside 5'-triphosphate = RNA(n+1) + diphosphate. Its function is as follows. Responsible for the cleavage of the polyprotein into functional products. In terms of biological role, protein covalently attached to the 5' extremity of the genomic and subgenomic RNAs. It may serve as a primer for the replicase. This is Non-structural polyprotein 1AB (ORF1) from Turkey astrovirus 2 (TAstV-2).